The sequence spans 130 residues: Iron-sulfur cluster insertion protein ErpA (130 aa).

Iron-sulfur cluster contacts are provided by Cys-46, Cys-116, and Cys-118.

It belongs to the HesB/IscA family. As to quaternary structure, homodimer. Requires iron-sulfur cluster as cofactor.

Required for insertion of 4Fe-4S clusters for at least IspG. The sequence is that of Iron-sulfur cluster insertion protein ErpA from Legionella pneumophila (strain Paris).